The sequence spans 130 residues: Small ribosomal subunit protein uS9 (130 aa).

Belongs to the universal ribosomal protein uS9 family.

The protein is Small ribosomal subunit protein uS9 of Shewanella piezotolerans (strain WP3 / JCM 13877).